We begin with the raw amino-acid sequence, 415 residues long: MAENLYRARSRVYSPSVLFLHPDMGIGGAERLVLDAALALQEYGCDVKIWTAHYDPNHCFIETRELSVQCAGDWLPRSLGWGGRGAAICSYVRMVFLALYVLFLSGEEFDVVVCDQVSACIPVFKLARRRKRVLFYCHFPDLLLTQRNSALKKFYRAPIDWIEEYTTGMADRILVNSQYTASVFKETFKTLSHRNPDVLYPSLNIGSFDLAIPEKIDDLVPKGKQFLFLSINRYERKKNLPLALRSLVQLRNRLPSQEWDKVHLFMAGGYDDRIPENVEHYKELKKMVQESDLERHVTFLRSFSDRQKISLLHGCLCVLYTPSNEHFGIVPLEAMYMQCPVIAVNNGGPLESIVHKVTGFLCEPDPVHFSEAMEKFIHKPSLKATMGLAGKARVAEKFSADAFADQLYQYVTKLV.

At 1-84 (MAENLYRARS…LPRSLGWGGR (84 aa)) the chain is on the cytoplasmic side. Positions 85–105 (GAAICSYVRMVFLALYVLFLS) form an intramembrane region, helical. Residues 106–415 (GEEFDVVVCD…QLYQYVTKLV (310 aa)) lie on the Cytoplasmic side of the membrane.

The protein belongs to the glycosyltransferase group 1 family. Glycosyltransferase 4 subfamily.

It localises to the endoplasmic reticulum membrane. The enzyme catalyses a beta-D-Man-(1-&gt;4)-beta-D-GlcNAc-(1-&gt;4)-alpha-D-GlcNAc-diphospho-di-trans,poly-cis-dolichol + GDP-alpha-D-mannose = an alpha-D-Man-(1-&gt;3)-beta-D-Man-(1-&gt;4)-beta-D-GlcNAc-(1-&gt;4)-alpha-D-GlcNAc-diphospho-di-trans,poly-cis-dolichol + GDP + H(+). It carries out the reaction an alpha-D-Man-(1-&gt;3)-beta-D-Man-(1-&gt;4)-beta-D-GlcNAc-(1-&gt;4)-alpha-D-GlcNAc-diphospho-di-trans,poly-cis-dolichol + GDP-alpha-D-mannose = an alpha-D-Man-(1-&gt;3)-[alpha-D-Man-(1-&gt;6)]-beta-D-Man-(1-&gt;4)-beta-D-GlcNAc-(1-&gt;4)-alpha-D-GlcNAc-diphospho-di-trans,poly-cis-dolichol + GDP + H(+). The catalysed reaction is a beta-D-Man-(1-&gt;4)-beta-D-GlcNAc-(1-&gt;4)-alpha-D-GlcNAc-diphospho-di-trans,poly-cis-dolichol + GDP-alpha-D-mannose = an alpha-D-Man-(1-&gt;6)-beta-D-Man-(1-&gt;4)-beta-D-GlcNAc-(1-&gt;4)-alpha-D-GlcNAc-diphospho-di-trans,poly-cis-dolichol + GDP + H(+). It catalyses the reaction an alpha-D-Man-(1-&gt;6)-beta-D-Man-(1-&gt;4)-beta-D-GlcNAc-(1-&gt;4)-alpha-D-GlcNAc-diphospho-di-trans,poly-cis-dolichol + GDP-alpha-D-mannose = an alpha-D-Man-(1-&gt;3)-[alpha-D-Man-(1-&gt;6)]-beta-D-Man-(1-&gt;4)-beta-D-GlcNAc-(1-&gt;4)-alpha-D-GlcNAc-diphospho-di-trans,poly-cis-dolichol + GDP + H(+). Its pathway is protein modification; protein glycosylation. Mannosyltransferase that operates in the biosynthetic pathway of dolichol-linked oligosaccharides, the glycan precursors employed in protein asparagine (N)-glycosylation. The assembly of dolichol-linked oligosaccharides begins on the cytosolic side of the endoplasmic reticulum membrane and finishes in its lumen. The sequential addition of sugars to dolichol pyrophosphate produces dolichol-linked oligosaccharides containing fourteen sugars, including two GlcNAcs, nine mannoses and three glucoses. Once assembled, the oligosaccharide is transferred from the lipid to nascent proteins by oligosaccharyltransferases. Catalyzes, on the cytoplasmic face of the endoplasmic reticulum, the addition of the second and third mannose residues to the dolichol-linked oligosaccharide chain, to produce Man3GlcNAc(2)-PP-dolichol core oligosaccharide. Man3GlcNAc(2)-PP-dolichol is a substrate for ALG11, the following enzyme in the biosynthetic pathway. While both alpha 1,3 and alpha 1,6 linkages are possible, the sequential addition of alpha 1,3 followed by alpha 1,6 is probably the preferred route. This chain is Alpha-1,3/1,6-mannosyltransferase ALG2 (Alg2), found in Mus musculus (Mouse).